The chain runs to 842 residues: Oxysterol-binding protein-related protein 7 (842 aa).

The disordered stretch occupies residues 1–28; that stretch reads MDFQERDPPFLPESAQSSKPSSAQQASE. Over residues 14 to 27 the composition is skewed to low complexity; the sequence is SAQSSKPSSAQQAS. The PH domain maps to 47–142; sequence PERQEGHLLK…WVAQLRAHRL (96 aa). Phosphothreonine is present on threonine 171. Phosphoserine is present on residues serine 217, serine 226, serine 256, and serine 272. A disordered region spans residues 330–369; it reads DMHQGSELSRMGVSEASTGQRRLHSLSTSSDTTADSFSSL. Residues 354-369 are compositionally biased toward low complexity; the sequence is SLSTSSDTTADSFSSL.

It belongs to the OSBP family. In terms of tissue distribution, expressed in epithelium of small and large intestines (at protein level). Expressed in stomach, duodenum, jejunum, ascending colon, spleen, thymus, lymph node, trachea and leukocytes.

The protein localises to the cytoplasm. It is found in the cytosol. It localises to the endoplasmic reticulum membrane. The protein resides in the cell membrane. The chain is Oxysterol-binding protein-related protein 7 (OSBPL7) from Homo sapiens (Human).